The sequence spans 311 residues: UPF0324 membrane protein VV1_3166 (311 aa).

A run of 10 helical transmembrane segments spans residues 8–28, 51–71, 74–94, 106–126, 133–153, 165–185, 197–217, 228–248, 256–276, and 289–309; these read FIFA…ALVL, LLSY…AIAV, DGIG…FLVA, LISA…APAI, IALA…IFPV, FGTW…AASA, LKLA…ILFA, LVLP…DLFP, GIFS…GCSI, and LIFG…WLLL.

The protein belongs to the UPF0324 family.

Its subcellular location is the cell membrane. The protein is UPF0324 membrane protein VV1_3166 of Vibrio vulnificus (strain CMCP6).